Reading from the N-terminus, the 741-residue chain is Lamin-B receptor (741 aa).

Residues 29–126 form a disordered region; sequence RLRRPRRTED…TGSGSGSSLP (98 aa). Composition is skewed to low complexity over residues 57 to 84 and 109 to 126; these read TRRT…RTRA and PRSS…SSLP. At Ser111 the chain carries Phosphoserine. Phosphothreonine is present on Thr135. The residue at position 144 (Ser144) is a Phosphoserine. The span at 160–184 shows a compositional bias: polar residues; sequence TNTSSGAPNKAFNTSSVNSGNSFSR. Residues 160-194 are disordered; the sequence is TNTSSGAPNKAFNTSSVNSGNSFSRTTTSSTTTTT. Residues 185–194 show a composition bias toward low complexity; that stretch reads TTTSSTTTTT. Phosphoserine is present on residues Ser223 and Ser225. Positions 231–240 are enriched in polar residues; the sequence is LAGTPVTNTE. The disordered stretch occupies residues 231 to 277; that stretch reads LAGTPVTNTEEGSRYSRSVSRSVYDDEKSSKRSYSTGEEDIDEEDEL. Phosphothreonine occurs at positions 234 and 237. 5 positions are modified to phosphoserine: Ser243, Ser246, Ser248, Ser250, and Ser263. Thr266 bears the Phosphothreonine mark. The span at 267 to 277 shows a compositional bias: acidic residues; it reads GEEDIDEEDEL. Ser284 carries the phosphoserine modification. Phosphothreonine is present on Thr288. Ser291 is modified (phosphoserine). Phosphothreonine is present on Thr293. Ser298 carries the post-translational modification Phosphoserine. 8 consecutive transmembrane segments (helical) span residues 308 to 328, 363 to 383, 402 to 422, 429 to 449, 497 to 517, 543 to 563, 577 to 599, and 604 to 624; these read FGGW…VYYL, VVGA…LLPG, LTLL…VTFV, FCIF…WLVD, LSLV…LVWP, PATL…IIFE, YGCL…TKYF, and VPIS…LGLL. Residues Ser640 and Ser642 each carry the phosphoserine modification. The chain crosses the membrane as a helical span at residues 687–707; sequence MALRPAWPPVLGLSLIILLLL.

This sequence belongs to the ERG4/ERG24 family. As to quaternary structure, interacts directly with LAM.

Its subcellular location is the nucleus inner membrane. Its function is as follows. Anchors the lamina and the heterochromatin to the inner nuclear membrane. This chain is Lamin-B receptor, found in Drosophila melanogaster (Fruit fly).